A 293-amino-acid chain; its full sequence is 4-hydroxy-tetrahydrodipicolinate synthase (293 aa).

T45 lines the pyruvate pocket. Y133 functions as the Proton donor/acceptor in the catalytic mechanism. K161 (schiff-base intermediate with substrate) is an active-site residue. Position 203 (I203) interacts with pyruvate.

Belongs to the DapA family. In terms of assembly, homotetramer; dimer of dimers.

It is found in the cytoplasm. The catalysed reaction is L-aspartate 4-semialdehyde + pyruvate = (2S,4S)-4-hydroxy-2,3,4,5-tetrahydrodipicolinate + H2O + H(+). It functions in the pathway amino-acid biosynthesis; L-lysine biosynthesis via DAP pathway; (S)-tetrahydrodipicolinate from L-aspartate: step 3/4. Its function is as follows. Catalyzes the condensation of (S)-aspartate-beta-semialdehyde [(S)-ASA] and pyruvate to 4-hydroxy-tetrahydrodipicolinate (HTPA). This is 4-hydroxy-tetrahydrodipicolinate synthase from Syntrophotalea carbinolica (strain DSM 2380 / NBRC 103641 / GraBd1) (Pelobacter carbinolicus).